We begin with the raw amino-acid sequence, 230 residues long: uncharacterized protein (230 aa).

Positions M1 to G22 are cleaved as a signal peptide. The Lumenal portion of the chain corresponds to A23–L167. The tract at residues S55–S90 is disordered. Residues I168–I188 form a helical membrane-spanning segment. Over A189–F230 the chain is Cytoplasmic. The segment at D208–F230 is disordered.

It localises to the endoplasmic reticulum membrane. This is an uncharacterized protein from Schizosaccharomyces pombe (strain 972 / ATCC 24843) (Fission yeast).